The primary structure comprises 878 residues: Probable LRR receptor-like serine/threonine-protein kinase MEE39 (878 aa).

The signal sequence occupies residues 1-25 (MKNLCWVFLSLFWFGVFLIIRFAEG). Residues 26–514 (QNQEGFISLD…IDKPKKKVAV (489 aa)) lie on the Extracellular side of the membrane. 8 N-linked (GlcNAc...) asparagine glycosylation sites follow: Asn-183, Asn-203, Asn-235, Asn-290, Asn-404, Asn-418, Asn-445, and Asn-466. 3 LRR repeats span residues 413-436 (RIIS…QNLA), 437-458 (HLES…FLAT), and 461-483 (SLLV…LRDR). Residues 515-535 (KVVAPVASIAAIVVVILLFVF) form a helical membrane-spanning segment. Topologically, residues 536-878 (KKKMSSRNKP…FDTDVKPKAR (343 aa)) are cytoplasmic. Thr-557 bears the Phosphothreonine mark. In terms of domain architecture, Protein kinase spans 566 to 840 (KNLQRPLGEG…QVIINLKECL (275 aa)). Residues 572-580 (LGEGGFGVV) and Lys-594 contribute to the ATP site. Tyr-639 is modified (phosphotyrosine). The active-site Proton acceptor is the Asp-691. Phosphoserine is present on Ser-726. Residues Thr-727 and Thr-732 each carry the phosphothreonine modification. Tyr-740 carries the post-translational modification Phosphotyrosine. The segment covering 849–869 (RNNQNMDSGHSSDQLNVTVTF) has biased composition (polar residues). The segment at 849-878 (RNNQNMDSGHSSDQLNVTVTFDTDVKPKAR) is disordered.

Belongs to the protein kinase superfamily. Ser/Thr protein kinase family.

It is found in the membrane. It carries out the reaction L-seryl-[protein] + ATP = O-phospho-L-seryl-[protein] + ADP + H(+). It catalyses the reaction L-threonyl-[protein] + ATP = O-phospho-L-threonyl-[protein] + ADP + H(+). Functionally, receptor-like serine/threonine-kinase required during the endosperm development in seeds. This Arabidopsis thaliana (Mouse-ear cress) protein is Probable LRR receptor-like serine/threonine-protein kinase MEE39 (MEE39).